The following is a 130-amino-acid chain: MYKAETRGISVIVTPRFVEEESSPDESRYFFAYTVEITNNGRDRVQLRSRHWRIIDGRGALQEVRGAGVVGKQPVLGPGESFSYTSGCPLPTPNGTMEGTYTMATADGESFEAVIPAFSLDVPHMRRVMH.

The ApaG domain occupies 3-127 (KAETRGISVI…FSLDVPHMRR (125 aa)).

The protein is Protein ApaG of Methylobacterium nodulans (strain LMG 21967 / CNCM I-2342 / ORS 2060).